The chain runs to 37 residues: Diptericin (37 aa).

Residues 1–37 (DLHIPPPDNKINWPQLSGGGGGSPKTGYDININAQQK) are disordered.

It belongs to the attacin/sarcotoxin-2 family. Synthesized by the fat body and secreted into the hemolymph.

The protein resides in the secreted. Acute phase protein with antibacterial activity against the Gram-negative bacteria E.coli (MIC=6.25 ug/ml) and S.sonnei (MIC=12.5 ug/ml). Lacks antibacterial activity against the Gram-negative bacteria P.vulgaris, P.rettgeri and P.aeruginosa, and against the Gram-positive bacteria B.subtilis, S.aureus, M.luteus, B.megaterium, C.bovis and E.cloacae. This is Diptericin from Sarcophaga peregrina (Flesh fly).